We begin with the raw amino-acid sequence, 335 residues long: Rho guanine nucleotide exchange factor 39 (335 aa).

A DH domain is found at 22 to 197 (KRACTARELL…SETAQRVHTI (176 aa)). Residues 227–331 (WFLRQGWLLV…WYHSLTWAIS (105 aa)) form the PH domain.

Strongly expressed in hepatocellular carcinoma (HCC) compared with their non-cancerous counterparts.

Its subcellular location is the cell membrane. Its function is as follows. Promotes cell proliferation. In Homo sapiens (Human), this protein is Rho guanine nucleotide exchange factor 39 (ARHGEF39).